The sequence spans 435 residues: Xylose isomerase (435 aa).

Mg(2+) contacts are provided by Asp-306 and Asp-308.

It belongs to the xylose isomerase family. Homotetramer. Mg(2+) is required as a cofactor.

The protein localises to the cytoplasm. It carries out the reaction alpha-D-xylose = alpha-D-xylulofuranose. In Brucella melitensis biotype 2 (strain ATCC 23457), this protein is Xylose isomerase.